The sequence spans 118 residues: UPF0148 protein M1627_1409 (118 aa).

This sequence belongs to the UPF0148 family.

This Saccharolobus islandicus (strain M.16.27) (Sulfolobus islandicus) protein is UPF0148 protein M1627_1409.